A 307-amino-acid chain; its full sequence is Undecaprenyl-diphosphatase 2 (307 aa).

A run of 8 helical transmembrane segments spans residues glycine 19–phenylalanine 41, isoleucine 56–tryptophan 76, phenylalanine 117–phenylalanine 137, leucine 144–phenylalanine 164, isoleucine 208–leucine 228, alanine 229–serine 249, valine 251–valine 271, and isoleucine 285–valine 305.

It belongs to the UppP family.

The protein resides in the cell membrane. The catalysed reaction is di-trans,octa-cis-undecaprenyl diphosphate + H2O = di-trans,octa-cis-undecaprenyl phosphate + phosphate + H(+). Its function is as follows. Catalyzes the dephosphorylation of undecaprenyl diphosphate (UPP). Confers resistance to bacitracin. In Clostridium acetobutylicum (strain ATCC 824 / DSM 792 / JCM 1419 / IAM 19013 / LMG 5710 / NBRC 13948 / NRRL B-527 / VKM B-1787 / 2291 / W), this protein is Undecaprenyl-diphosphatase 2.